Consider the following 426-residue polypeptide: Glucose-1-phosphate adenylyltransferase (426 aa).

Residues G165, 180-181 (EK), and S191 each bind alpha-D-glucose 1-phosphate.

Belongs to the bacterial/plant glucose-1-phosphate adenylyltransferase family. In terms of assembly, homotetramer.

It carries out the reaction alpha-D-glucose 1-phosphate + ATP + H(+) = ADP-alpha-D-glucose + diphosphate. The protein operates within glycan biosynthesis; glycogen biosynthesis. Its function is as follows. Involved in the biosynthesis of ADP-glucose, a building block required for the elongation reactions to produce glycogen. Catalyzes the reaction between ATP and alpha-D-glucose 1-phosphate (G1P) to produce pyrophosphate and ADP-Glc. In Ruminiclostridium cellulolyticum (strain ATCC 35319 / DSM 5812 / JCM 6584 / H10) (Clostridium cellulolyticum), this protein is Glucose-1-phosphate adenylyltransferase.